A 346-amino-acid chain; its full sequence is Biotin synthase (346 aa).

The 225-residue stretch at 40 to 264 (NEVQVSTLLS…MMPHSHVRLS (225 aa)) folds into the Radical SAM core domain. 3 residues coordinate [4Fe-4S] cluster: Cys55, Cys59, and Cys62. [2Fe-2S] cluster contacts are provided by Cys99, Cys130, Cys190, and Arg262.

This sequence belongs to the radical SAM superfamily. Biotin synthase family. In terms of assembly, homodimer. Requires [4Fe-4S] cluster as cofactor. [2Fe-2S] cluster is required as a cofactor.

The enzyme catalyses (4R,5S)-dethiobiotin + (sulfur carrier)-SH + 2 reduced [2Fe-2S]-[ferredoxin] + 2 S-adenosyl-L-methionine = (sulfur carrier)-H + biotin + 2 5'-deoxyadenosine + 2 L-methionine + 2 oxidized [2Fe-2S]-[ferredoxin]. Its pathway is cofactor biosynthesis; biotin biosynthesis; biotin from 7,8-diaminononanoate: step 2/2. Functionally, catalyzes the conversion of dethiobiotin (DTB) to biotin by the insertion of a sulfur atom into dethiobiotin via a radical-based mechanism. The sequence is that of Biotin synthase from Colwellia psychrerythraea (strain 34H / ATCC BAA-681) (Vibrio psychroerythus).